The chain runs to 117 residues: Large ribosomal subunit protein bL20 (117 aa).

This sequence belongs to the bacterial ribosomal protein bL20 family.

Binds directly to 23S ribosomal RNA and is necessary for the in vitro assembly process of the 50S ribosomal subunit. It is not involved in the protein synthesizing functions of that subunit. The protein is Large ribosomal subunit protein bL20 of Geotalea daltonii (strain DSM 22248 / JCM 15807 / FRC-32) (Geobacter daltonii).